The primary structure comprises 272 residues: Shikimate dehydrogenase (NADP(+)) (272 aa).

Shikimate contacts are provided by residues 14 to 16 and T61; that span reads SKS. K65 (proton acceptor) is an active-site residue. E77 provides a ligand contact to NADP(+). Positions 86 and 102 each coordinate shikimate. NADP(+)-binding positions include 126–130, 150–155, and M213; these read GAGGA and NRTFSK. Y215 contributes to the shikimate binding site. G237 serves as a coordination point for NADP(+).

Belongs to the shikimate dehydrogenase family. In terms of assembly, homodimer.

It catalyses the reaction shikimate + NADP(+) = 3-dehydroshikimate + NADPH + H(+). It functions in the pathway metabolic intermediate biosynthesis; chorismate biosynthesis; chorismate from D-erythrose 4-phosphate and phosphoenolpyruvate: step 4/7. Its function is as follows. Involved in the biosynthesis of the chorismate, which leads to the biosynthesis of aromatic amino acids. Catalyzes the reversible NADPH linked reduction of 3-dehydroshikimate (DHSA) to yield shikimate (SA). This chain is Shikimate dehydrogenase (NADP(+)), found in Psychromonas ingrahamii (strain DSM 17664 / CCUG 51855 / 37).